The primary structure comprises 220 residues: Fructose-6-phosphate aldolase (220 aa).

Lys85 (schiff-base intermediate with substrate) is an active-site residue.

The protein belongs to the transaldolase family. Type 3A subfamily. As to quaternary structure, homodecamer.

The protein localises to the cytoplasm. The enzyme catalyses beta-D-fructose 6-phosphate = dihydroxyacetone + D-glyceraldehyde 3-phosphate. Functionally, catalyzes the reversible formation of fructose 6-phosphate from dihydroxyacetone and D-glyceraldehyde 3-phosphate via an aldolization reaction. This Salmonella heidelberg (strain SL476) protein is Fructose-6-phosphate aldolase.